The following is a 464-amino-acid chain: NADH-ubiquinone oxidoreductase chain 4 (464 aa).

Transmembrane regions (helical) follow at residues 1–21, 63–83, 98–118, 119–139, 152–172, 197–217, 227–247, 261–281, 288–308, 314–334, 355–375, 389–409, and 443–463; these read MMIT…VIPQ, SISA…LIAS, FIII…ALEL, LLFY…ITRW, FMFY…AIYI, IWWA…GFHL, PVAG…YGLI, LSLA…IICV, ALIA…IFSS, NGAL…FSLA, ILPL…GLPP, LIAW…FGAI, and LHTL…ITWL.

It belongs to the complex I subunit 4 family.

The protein localises to the mitochondrion membrane. It carries out the reaction a ubiquinone + NADH + 5 H(+)(in) = a ubiquinol + NAD(+) + 4 H(+)(out). Core subunit of the mitochondrial membrane respiratory chain NADH dehydrogenase (Complex I) that is believed to belong to the minimal assembly required for catalysis. Complex I functions in the transfer of electrons from NADH to the respiratory chain. The immediate electron acceptor for the enzyme is believed to be ubiquinone. The chain is NADH-ubiquinone oxidoreductase chain 4 (ND4) from Paracentrotus lividus (Common sea urchin).